Consider the following 398-residue polypeptide: Elongation factor Tu (398 aa).

The region spanning 10-207 is the tr-type G domain; the sequence is KPHVNIGTIG…TADEYIPEPE (198 aa). Residues 19–26 are G1; it reads GHVDHGKT. 19 to 26 provides a ligand contact to GTP; it reads GHVDHGKT. Threonine 26 contributes to the Mg(2+) binding site. Positions 63 to 67 are G2; sequence GITIN. Residues 84–87 form a G3 region; it reads DAPG. Residues 84 to 88 and 139 to 142 each bind GTP; these read DAPGH and NKID. The G4 stretch occupies residues 139-142; sequence NKID. Positions 177 to 179 are G5; the sequence is SAL.

This sequence belongs to the TRAFAC class translation factor GTPase superfamily. Classic translation factor GTPase family. EF-Tu/EF-1A subfamily. Monomer.

The protein resides in the cytoplasm. The enzyme catalyses GTP + H2O = GDP + phosphate + H(+). GTP hydrolase that promotes the GTP-dependent binding of aminoacyl-tRNA to the A-site of ribosomes during protein biosynthesis. This is Elongation factor Tu from Streptococcus uberis (strain ATCC BAA-854 / 0140J).